We begin with the raw amino-acid sequence, 199 residues long: Thioredoxin peroxidase (199 aa).

The Thioredoxin domain maps to 6 to 165 (AKLNHPAPHF…TLRLVKAFQF (160 aa)). Residue cysteine 52 is the Cysteine sulfenic acid (-SOH) intermediate of the active site. Residues 179-199 (PGSKTMKADPNGSQDYFSSMN) form a disordered region. Positions 189-199 (NGSQDYFSSMN) are enriched in polar residues.

This sequence belongs to the peroxiredoxin family. AhpC/Prx1 subfamily. As to quaternary structure, homodimer; disulfide-linked, upon oxidation.

The enzyme catalyses a hydroperoxide + [thioredoxin]-dithiol = an alcohol + [thioredoxin]-disulfide + H2O. Thiol-specific peroxidase that catalyzes the reduction of hydrogen peroxide and organic hydroperoxides to water and alcohols, respectively. Plays a role in cell protection against oxidative stress by detoxifying peroxides and as sensor of hydrogen peroxide-mediated signaling events. This chain is Thioredoxin peroxidase, found in Trypanosoma brucei rhodesiense.